We begin with the raw amino-acid sequence, 443 residues long: 26S proteasome regulatory subunit 4 homolog B (443 aa).

2 disordered regions span residues 1–55 and 87–108; these read MGQG…LPTV and RLKPQEEKAEEDRSKVDDLRGT. Basic and acidic residues-rich tracts occupy residues 12–28 and 87–106; these read QGDRKPDGGEKKEKKFE and RLKPQEEKAEEDRSKVDDLR. Residue 229 to 236 coordinates ATP; it reads GEPGTGKT. Glycyl lysine isopeptide (Lys-Gly) (interchain with G-Cter in ubiquitin) cross-links involve residues Lys-296 and Lys-433.

This sequence belongs to the AAA ATPase family. Component of the 19S regulatory particle (RP/PA700) base subcomplex of the 26S proteasome. The 26S proteasome is composed of a core protease (CP), known as the 20S proteasome, capped at one or both ends by the 19S regulatory particle (RP/PA700). The RP/PA700 complex is composed of at least 17 different subunits in two subcomplexes, the base and the lid, which form the portions proximal and distal to the 20S proteolytic core, respectively. Preferentially expressed in the root and shoot apical meristem.

The protein localises to the cytoplasm. It is found in the nucleus. Functionally, the 26S protease is involved in the ATP-dependent degradation of ubiquitinated proteins. The regulatory (or ATPase) complex confers ATP dependency and substrate specificity to the 26S complex. Acts redundantly with RPT2A in the regulation of gametogenesis. With RPT2A plays a critical role in 26S proteasome assembly. This chain is 26S proteasome regulatory subunit 4 homolog B, found in Arabidopsis thaliana (Mouse-ear cress).